Here is an 85-residue protein sequence, read N- to C-terminus: SPbeta prophage-derived uncharacterized protein YoqG (85 aa).

The polypeptide is SPbeta prophage-derived uncharacterized protein YoqG (yoqG) (Bacillus subtilis (strain 168)).